We begin with the raw amino-acid sequence, 403 residues long: Accessory Sec system protein translocase subunit SecY2 (403 aa).

10 helical membrane passes run 17 to 37 (MLYT…SIVS), 63 to 83 (LNIF…LMLI), 105 to 125 (ILTL…YVSK), 131 to 151 (DNIY…VWLA), 157 to 177 (YGIA…MMHQ), 186 to 206 (HIVI…LLFI), 240 to 260 (ITLM…HFIL), 276 to 296 (FDSP…GYFL), 339 to 359 (WFGL…TLFV), and 366 to 386 (IYFS…AETI).

It belongs to the SecY/SEC61-alpha family. SecY2 subfamily. As to quaternary structure, may form heterotrimers with SecE and SecG subunits (Potential). Component of the accessory SecA2/SecY2 protein translocase complex required to export cell wall protein SrpA.

Its subcellular location is the cell membrane. The central subunit of a protein translocation channel (Potential). Part of the accessory SecA2/SecY2 system specifically required to export SraP, a serine-rich repeat cell wall protein encoded upstream in the same operon. This is Accessory Sec system protein translocase subunit SecY2 from Staphylococcus aureus (strain NCTC 8325 / PS 47).